A 123-amino-acid polypeptide reads, in one-letter code: T-complex protein 1 subunit alpha (123 aa).

Position 68 (Gly68) interacts with ADP.

It belongs to the TCP-1 chaperonin family. In terms of assembly, component of the chaperonin-containing T-complex (TRiC), a hexadecamer composed of two identical back-to-back stacked rings enclosing a protein folding chamber. Each ring is made up of eight different subunits: TCP1/CCT1, CCT2, CCT3, CCT4, CCT5, CCT6A/CCT6, CCT7, CCT8. Interacts with PACRG. Interacts with GBA1. Interacts with DLEC1.

The protein resides in the cytoplasm. It is found in the cytosol. Its subcellular location is the cytoskeleton. It localises to the microtubule organizing center. The protein localises to the centrosome. It catalyses the reaction ATP + H2O = ADP + phosphate + H(+). Component of the chaperonin-containing T-complex (TRiC), a molecular chaperone complex that assists the folding of actin, tubulin and other proteins upon ATP hydrolysis. The TRiC complex mediates the folding of WRAP53/TCAB1, thereby regulating telomere maintenance. As part of the TRiC complex may play a role in the assembly of BBSome, a complex involved in ciliogenesis regulating transports vesicles to the cilia. The protein is T-complex protein 1 subunit alpha of Mesocricetus auratus (Golden hamster).